A 404-amino-acid chain; its full sequence is Probable ketol-acid reductoisomerase, mitochondrial (404 aa).

Positions 63 to 253 (TKENVWERSD…AVGSGFIYQT (191 aa)) constitute a KARI N-terminal Rossmann domain. Residues 91–100 (GYGSQGHGQG), 115–120 (RKDGAS), and 153–157 (SDAAQ) contribute to the NADP(+) site. H178 is a catalytic residue. Residues 254-401 (TFKKEVISDL…EVVRSLRPEH (148 aa)) enclose the KARI C-terminal knotted domain. A Phosphoserine modification is found at S261. Mg(2+) is bound by residues D262, E266, E298, and E302. A substrate-binding site is contributed by S324.

This sequence belongs to the ketol-acid reductoisomerase family. Mg(2+) is required as a cofactor.

The protein resides in the mitochondrion. The enzyme catalyses (2R)-2,3-dihydroxy-3-methylbutanoate + NADP(+) = (2S)-2-acetolactate + NADPH + H(+). The catalysed reaction is (2R,3R)-2,3-dihydroxy-3-methylpentanoate + NADP(+) = (S)-2-ethyl-2-hydroxy-3-oxobutanoate + NADPH + H(+). Its pathway is amino-acid biosynthesis; L-isoleucine biosynthesis; L-isoleucine from 2-oxobutanoate: step 2/4. The protein operates within amino-acid biosynthesis; L-valine biosynthesis; L-valine from pyruvate: step 2/4. The polypeptide is Probable ketol-acid reductoisomerase, mitochondrial (ilv5) (Schizosaccharomyces pombe (strain 972 / ATCC 24843) (Fission yeast)).